Here is a 50-residue protein sequence, read N- to C-terminus: Protease inhibitor 2 (50 aa).

Residues 2–50 (EDCVGRKACTREWYPVCGSDGVTYSNPCNFSAQQEQCDPNITIAHMGEC) enclose the Kazal-like domain. Disulfide bonds link Cys10–Cys29 and Cys18–Cys50. Asn30 and Asn41 each carry an N-linked (GlcNAc...) asparagine glycan.

Serine protease inhibitor. Strongly inhibits human neutrophil elastase and trypsin, also inhibits porcine pancreatic elastase and subtilisin A. Does not inhibit chymotrypsin, plasma kallikrein, pancreatic kallikrein, thrombin or papain. The protein is Protease inhibitor 2 of Cenchritis muricatus (Beaded periwinkle).